Reading from the N-terminus, the 530-residue chain is Ubiquitin carboxyl-terminal hydrolase 17-like protein 13 (530 aa).

Positions 80–375 (AGLQNMGNTC…QAYVLFYIQK (296 aa)) constitute a USP domain. The active-site Nucleophile is C89. Residue H334 is the Proton acceptor of the active site. 2 stretches are compositionally biased toward basic and acidic residues: residues 382–392 (SESVSRGREPR) and 398–412 (DTDR…KRDH). Disordered regions lie at residues 382–412 (SESV…KRDH) and 477–530 (NHHP…LVCQ). The span at 493-505 (TPTHQESMNTGTL) shows a compositional bias: polar residues. The segment covering 510-524 (GRARRSKGKNKHSKR) has biased composition (basic residues).

It belongs to the peptidase C19 family. USP17 subfamily.

The protein resides in the nucleus. It localises to the endoplasmic reticulum. The enzyme catalyses Thiol-dependent hydrolysis of ester, thioester, amide, peptide and isopeptide bonds formed by the C-terminal Gly of ubiquitin (a 76-residue protein attached to proteins as an intracellular targeting signal).. In terms of biological role, deubiquitinating enzyme that removes conjugated ubiquitin from specific proteins to regulate different cellular processes that may include cell proliferation, progression through the cell cycle, apoptosis, cell migration, and the cellular response to viral infection. The polypeptide is Ubiquitin carboxyl-terminal hydrolase 17-like protein 13 (USP17L13) (Homo sapiens (Human)).